The sequence spans 624 residues: LRR receptor kinase BAK1 (624 aa).

An N-terminal signal peptide occupies residues Met1 to Ala25. Residues Asn26–Gly237 are Extracellular-facing. LRR repeat units follow at residues Leu91 to Leu115, Asn117 to Leu139, Leu140 to Ile163, and Thr164 to Leu188. Residues Asn103, Asn114, Asn127, Asn149, and Asn175 are each glycosylated (N-linked (GlcNAc...) asparagine). The disordered stretch occupies residues Thr205–Thr236. Residues Pro210 to Val227 show a composition bias toward pro residues. A helical membrane pass occupies residues Ala238–Phe258. Topologically, residues Ala259 to Arg624 are cytoplasmic. Residues Phe301–Gln588 form the Protein kinase domain. Residues Leu307 to Val315 and Lys329 each bind ATP. Asp428 functions as the Proton acceptor in the catalytic mechanism.

It belongs to the protein kinase superfamily. Ser/Thr protein kinase family. Forms homodimers. Interacts with BRI1. Interacts with REM4.1.

The protein resides in the cell membrane. The catalysed reaction is L-seryl-[protein] + ATP = O-phospho-L-seryl-[protein] + ADP + H(+). It carries out the reaction L-threonyl-[protein] + ATP = O-phospho-L-threonyl-[protein] + ADP + H(+). LRR receptor kinase involved in defense response. Does not seem to be required specifically for XA21-mediated immunity or basal resistance to Xanthomonas oryzae pv. oryzae (Xoo), or immunity to Magnaporthe oryzae. Involved in brassinosteroid (BR) signaling pathway. Acts as a coreceptor of BRI1. Forms at the plasma membrane a receptor complex with BRI1 which is activated in response to brassinolide. Phosphorylates BRI1. Required for normal plant growth and leaf development. Possesses kinase activity in vitro. In Oryza sativa subsp. indica (Rice), this protein is LRR receptor kinase BAK1.